The chain runs to 317 residues: Acetyl-coenzyme A carboxylase carboxyl transferase subunit alpha (317 aa).

Residues 39–293 (RLETKAREAL…GDAIADALSQ (255 aa)) enclose the CoA carboxyltransferase C-terminal domain.

The protein belongs to the AccA family. Acetyl-CoA carboxylase is a heterohexamer composed of biotin carboxyl carrier protein (AccB), biotin carboxylase (AccC) and two subunits each of ACCase subunit alpha (AccA) and ACCase subunit beta (AccD).

The protein localises to the cytoplasm. The catalysed reaction is N(6)-carboxybiotinyl-L-lysyl-[protein] + acetyl-CoA = N(6)-biotinyl-L-lysyl-[protein] + malonyl-CoA. The protein operates within lipid metabolism; malonyl-CoA biosynthesis; malonyl-CoA from acetyl-CoA: step 1/1. Component of the acetyl coenzyme A carboxylase (ACC) complex. First, biotin carboxylase catalyzes the carboxylation of biotin on its carrier protein (BCCP) and then the CO(2) group is transferred by the carboxyltransferase to acetyl-CoA to form malonyl-CoA. The polypeptide is Acetyl-coenzyme A carboxylase carboxyl transferase subunit alpha (Xanthobacter autotrophicus (strain ATCC BAA-1158 / Py2)).